The sequence spans 84 residues: Antimicrobial peptide MeuNaTxbeta-2 (84 aa).

Positions 1–20 (MMKTVIVLIVFSLVMIVVKS) are cleaved as a signal peptide. In terms of domain architecture, LCN-type CS-alpha/beta spans 21–83 (DNGYLLDKYT…LWHYETNRCR (63 aa)). Cystine bridges form between Cys32-Cys82, Cys36-Cys57, Cys43-Cys64, and Cys47-Cys66.

As to expression, expressed by the venom gland.

The protein resides in the secreted. Antimicrobial peptide with activity against both Gram-positive and -negative bacteria. In Mesobuthus eupeus (Lesser Asian scorpion), this protein is Antimicrobial peptide MeuNaTxbeta-2.